Reading from the N-terminus, the 262-residue chain is Acyl-[acyl-carrier-protein]--UDP-N-acetylglucosamine O-acyltransferase (262 aa).

Belongs to the transferase hexapeptide repeat family. LpxA subfamily. As to quaternary structure, homotrimer.

It is found in the cytoplasm. It catalyses the reaction a (3R)-hydroxyacyl-[ACP] + UDP-N-acetyl-alpha-D-glucosamine = a UDP-3-O-[(3R)-3-hydroxyacyl]-N-acetyl-alpha-D-glucosamine + holo-[ACP]. The protein operates within glycolipid biosynthesis; lipid IV(A) biosynthesis; lipid IV(A) from (3R)-3-hydroxytetradecanoyl-[acyl-carrier-protein] and UDP-N-acetyl-alpha-D-glucosamine: step 1/6. Involved in the biosynthesis of lipid A, a phosphorylated glycolipid that anchors the lipopolysaccharide to the outer membrane of the cell. The sequence is that of Acyl-[acyl-carrier-protein]--UDP-N-acetylglucosamine O-acyltransferase from Burkholderia ambifaria (strain ATCC BAA-244 / DSM 16087 / CCUG 44356 / LMG 19182 / AMMD) (Burkholderia cepacia (strain AMMD)).